The primary structure comprises 177 residues: Large ribosomal subunit protein eL20 (177 aa).

This sequence belongs to the eukaryotic ribosomal protein eL20 family.

In Drosophila melanogaster (Fruit fly), this protein is Large ribosomal subunit protein eL20 (RpL18A).